The primary structure comprises 255 residues: 5'-nucleotidase SurE (255 aa).

Aspartate 8, aspartate 9, serine 40, and asparagine 93 together coordinate a divalent metal cation.

Belongs to the SurE nucleotidase family. A divalent metal cation is required as a cofactor.

The protein localises to the cytoplasm. It carries out the reaction a ribonucleoside 5'-phosphate + H2O = a ribonucleoside + phosphate. Its function is as follows. Nucleotidase that shows phosphatase activity on nucleoside 5'-monophosphates. This is 5'-nucleotidase SurE from Rhodopseudomonas palustris (strain HaA2).